The following is a 118-amino-acid chain: UPF0102 protein NE0711 (118 aa).

Belongs to the UPF0102 family.

The sequence is that of UPF0102 protein NE0711 from Nitrosomonas europaea (strain ATCC 19718 / CIP 103999 / KCTC 2705 / NBRC 14298).